Here is a 548-residue protein sequence, read N- to C-terminus: Tripartite motif-containing protein 55 (548 aa).

The RING-type zinc-finger motif lies at 10 to 66 (FSKEQQTMDNLEKQLICPICLEMFTKPVVILPCQHNLCRKCASDIFQASNPYLPTRG). The segment at 103-145 (NIIDIYKQESTRPEKKSDQPMCEEHEEERINIYCLNCEVPTCS) adopts a B box-type zinc-finger fold. Residues cysteine 124, histidine 127, cysteine 147, and histidine 153 each contribute to the Zn(2+) site. Residues 168–248 (QKSELSDGIA…EKLEHVRALI (81 aa)) adopt a coiled-coil conformation. The COS domain occupies 269–327 (MDEPEMAVFLQNAKTLLKKISEASKAFQMEKIEHGYENMNHFTVNLNREEKIIREIDFY). Positions 326–532 (FYREDEDEEE…PASGSGADSE (207 aa)) are disordered. 2 stretches are compositionally biased toward acidic residues: residues 328-339 (REDEDEEEEEGG) and 347-360 (GEVG…EEVE). Composition is skewed to low complexity over residues 484 to 496 (VAAA…AAVS) and 512 to 531 (EAPP…GADS).

Homooligomer and heterooligomer. Interacts with titin/TTN. Interacts with myosins. Interacts with SQSTM1 and NBR1. Isoform 4 may not able to interact with isoform 1, isoform 2 and isoform 3. Probably interacts with TRIM63 and TRIM54. Targeted for degradation through the proteasomal and lysosomal pathways in the presence of SUMO3. As to expression, highly expressed in muscle. Low-level expression in liver.

It localises to the nucleus. The protein localises to the cytoplasm. It carries out the reaction S-ubiquitinyl-[E2 ubiquitin-conjugating enzyme]-L-cysteine + [acceptor protein]-L-lysine = [E2 ubiquitin-conjugating enzyme]-L-cysteine + N(6)-ubiquitinyl-[acceptor protein]-L-lysine.. Its function is as follows. E3 ubiquitin ligase that plays an important role in regulating cardiac development and contractility, muscle growth, metabolism, and fiber-type differentiation. Acts as a critical factor that regulates cardiomyocyte size during development in concert with TRIM63 by regulating E2F1-mediated gene expression. Plays a role in apoptosis induction in cardiomyocytes by promoting ubiquitination of the DUSP1 phosphatase. Promotes non-canonical NF-kappa-B signaling and B-cell-mediated immune responses by mediating NFKB2 'Lys-48'-linked ubiquitination and processing. In turn, NFKB2 is further processed by valosin-containing protein/VCP, an ATPase that mediates ubiquitin-dependent protein degradation by the proteasome. May play a role in preventing macrophages from producing inflammatory factors and migrating by downregulating the level of nuclear NF-kappa-B subunit RELA. Also modifies PPARG via polyubiquitination and accelerates PPARG proteasomal degradation to inhibit its activity. This is Tripartite motif-containing protein 55 (TRIM55) from Homo sapiens (Human).